The chain runs to 212 residues: ATP-dependent Clp protease proteolytic subunit (212 aa).

The Nucleophile role is filled by S109. H134 is an active-site residue.

It belongs to the peptidase S14 family. Fourteen ClpP subunits assemble into 2 heptameric rings which stack back to back to give a disk-like structure with a central cavity, resembling the structure of eukaryotic proteasomes.

It localises to the cytoplasm. It catalyses the reaction Hydrolysis of proteins to small peptides in the presence of ATP and magnesium. alpha-casein is the usual test substrate. In the absence of ATP, only oligopeptides shorter than five residues are hydrolyzed (such as succinyl-Leu-Tyr-|-NHMec, and Leu-Tyr-Leu-|-Tyr-Trp, in which cleavage of the -Tyr-|-Leu- and -Tyr-|-Trp bonds also occurs).. Functionally, cleaves peptides in various proteins in a process that requires ATP hydrolysis. Has a chymotrypsin-like activity. Plays a major role in the degradation of misfolded proteins. The protein is ATP-dependent Clp protease proteolytic subunit of Bdellovibrio bacteriovorus (strain ATCC 15356 / DSM 50701 / NCIMB 9529 / HD100).